Consider the following 254-residue polypeptide: 5'-nucleotidase SurE (254 aa).

A divalent metal cation contacts are provided by Asp-8, Asp-9, Ser-38, and Asn-91.

This sequence belongs to the SurE nucleotidase family. A divalent metal cation serves as cofactor.

The protein resides in the cytoplasm. The enzyme catalyses a ribonucleoside 5'-phosphate + H2O = a ribonucleoside + phosphate. Its function is as follows. Nucleotidase that shows phosphatase activity on nucleoside 5'-monophosphates. The protein is 5'-nucleotidase SurE of Anaeromyxobacter sp. (strain K).